The chain runs to 785 residues: Pre-tRNA-processing protein PTA1 (785 aa).

The tract at residues 487-544 (INSVPSSSSSKRKSDDDDDGNDNEEVGNDGPTANSKKIKMETEPLAEEPEEPEDDDRM) is disordered. The residue at position 500 (Ser-500) is a Phosphoserine. Acidic residues-rich tracts occupy residues 502–513 (DDDDGNDNEEVG) and 530–542 (PLAEEPEEPEDDD).

In terms of assembly, component of the cleavage and polyadenylation factor (CPF) complex, which is composed of PTI1, SYC1, SSU72, GLC7, MPE1, REF2, PFS2, PTA1, YSH1/BRR5, SWD2, CFT2/YDH1, YTH1, CFT1/YHH1, FIP1 and PAP1. Component of the APT complex, which is a subcomplex of CPF, and is composed of PTI1, SYC1, SSU72, GLC7, REF2, PTA1 and SWD2.

It is found in the nucleus. In terms of biological role, essential in pre-tRNA processing. Component of the cleavage and polyadenylation factor (CPF) complex, which plays a key role in polyadenylation-dependent pre-mRNA 3'-end formation and cooperates with cleavage factors including the CFIA complex and NAB4/CFIB. Component of the APT complex, which may be involved in polyadenylation-independent transcript 3'-end formation. In Saccharomyces cerevisiae (strain ATCC 204508 / S288c) (Baker's yeast), this protein is Pre-tRNA-processing protein PTA1 (PTA1).